The chain runs to 169 residues: S-ribosylhomocysteine lyase (169 aa).

His-54, His-58, and Cys-128 together coordinate Fe cation.

It belongs to the LuxS family. As to quaternary structure, homodimer. Fe cation is required as a cofactor.

It carries out the reaction S-(5-deoxy-D-ribos-5-yl)-L-homocysteine = (S)-4,5-dihydroxypentane-2,3-dione + L-homocysteine. Involved in the synthesis of autoinducer 2 (AI-2) which is secreted by bacteria and is used to communicate both the cell density and the metabolic potential of the environment. The regulation of gene expression in response to changes in cell density is called quorum sensing. Catalyzes the transformation of S-ribosylhomocysteine (RHC) to homocysteine (HC) and 4,5-dihydroxy-2,3-pentadione (DPD). The protein is S-ribosylhomocysteine lyase of Sulfurovum sp. (strain NBC37-1).